Consider the following 250-residue polypeptide: ATP synthase subunit a (250 aa).

Helical transmembrane passes span 26–46, 84–104, 114–134, 143–163, 193–213, and 216–236; these read FTNASLFMVATVGAAAGFLYL, FFPMVFSLFMFILTANLLGMV, IIVTFALAVFVIGTVLLYGFY, LFVPQGVPGALLPLVVAIEII, FVASLSAFGALGIGGAILPLI, and VALTGLEFLVAFLQAYVFAVL.

Belongs to the ATPase A chain family. As to quaternary structure, F-type ATPases have 2 components, CF(1) - the catalytic core - and CF(0) - the membrane proton channel. CF(1) has five subunits: alpha(3), beta(3), gamma(1), delta(1), epsilon(1). CF(0) has three main subunits: a(1), b(2) and c(9-12). The alpha and beta chains form an alternating ring which encloses part of the gamma chain. CF(1) is attached to CF(0) by a central stalk formed by the gamma and epsilon chains, while a peripheral stalk is formed by the delta and b chains.

Its subcellular location is the cell inner membrane. Key component of the proton channel; it plays a direct role in the translocation of protons across the membrane. This is ATP synthase subunit a from Rhizobium meliloti (strain 1021) (Ensifer meliloti).